The sequence spans 129 residues: Serum amyloid A-1 protein (129 aa).

Positions 1-18 (MKLFTGLIFCSLVLGVSS) are cleaved as a signal peptide. Residues 19–44 (QWYSFIGEAAQGAWDMYRAYSDMIEA) form an important for amyloid formation region. Residues 92 to 129 (GDSGHGVEDSKADQAANEWGRSGKDPNHFRPPGLPDKY) are disordered.

This sequence belongs to the SAA family. As to quaternary structure, homohexamer; dimer of trimers. Can form amyloid fibrils after partial proteolysis; the native, undenatured protein does not form amyloid fibrils (in vitro). Apolipoprotein of the HDL complex. Binds to heparin. In terms of tissue distribution, detected in liver.

Its subcellular location is the secreted. In terms of biological role, major acute phase protein. This Neovison vison (American mink) protein is Serum amyloid A-1 protein (SAA1).